The primary structure comprises 178 residues: MORN repeat-containing protein 5 (178 aa).

MORN repeat units follow at residues 8 to 30 (YDGD…THTR), 31 to 53 (YVGE…NGSK), and 54 to 75 (YEGT…DGLK).

The protein localises to the cell projection. The protein resides in the cilium. It is found in the flagellum. This is MORN repeat-containing protein 5 (morn5) from Danio rerio (Zebrafish).